Consider the following 629-residue polypeptide: Tudor and KH domain-containing protein homolog (629 aa).

The helical transmembrane segment at 9–29 (LPIALGLSLVTVTAFVAYYVL) threads the bilayer. 2 consecutive KH domains span residues 46-109 (INTI…ETLI) and 119-185 (IMSE…KKLV). Positions 198–240 (IEQSKRPPRHSSSPPSPCPSPGDRDADADAQGDVDHTRVKYKR) are disordered. Over residues 219–240 (GDRDADADAQGDVDHTRVKYKR) the composition is skewed to basic and acidic residues. A Tudor domain is found at 297–362 (HVSVGQVVAA…CELRADLLRL (66 aa)). The disordered stretch occupies residues 464–526 (PAPSPRPSPP…GDDSKDKDGI (63 aa)).

Belongs to the Tdrkh family. As to quaternary structure, interacts with (symmetrically methylated) Siwi. Interacts with (symmetrically methylated) Ago3. Interacts with PNLDC1/trimmer; interaction takes place on the mitochondrial surface and recruits PNLDC1/trimmer to Siwi-bound pre-piRNAs.

The protein localises to the mitochondrion outer membrane. In terms of biological role, participates in the primary piRNA biogenesis pathway and is required during spermatogenesis to repress transposable elements and prevent their mobilization, which is essential for the germline integrity. The piRNA metabolic process mediates the repression of transposable elements during meiosis by forming complexes composed of piRNAs and Piwi proteins (Siwi or Ago3) and govern the methylation and subsequent repression of transposons. Required for the final steps of primary piRNA biogenesis by participating in the processing of 31-37 nt intermediates into mature piRNAs: acts by recruiting the exonuclease PNLDC1/trimmer to Siwi-bound pre-piRNAs. The chain is Tudor and KH domain-containing protein homolog from Bombyx mori (Silk moth).